The following is a 685-amino-acid chain: DNA-directed RNA polymerase subunit beta' (685 aa).

Zn(2+) contacts are provided by Cys-69, Cys-71, Cys-87, and Cys-90. Asp-492, Asp-494, and Asp-496 together coordinate Mg(2+).

This sequence belongs to the RNA polymerase beta' chain family. RpoC1 subfamily. As to quaternary structure, in plastids the minimal PEP RNA polymerase catalytic core is composed of four subunits: alpha, beta, beta', and beta''. When a (nuclear-encoded) sigma factor is associated with the core the holoenzyme is formed, which can initiate transcription. Requires Mg(2+) as cofactor. Zn(2+) is required as a cofactor.

The protein localises to the plastid. It localises to the chloroplast. It carries out the reaction RNA(n) + a ribonucleoside 5'-triphosphate = RNA(n+1) + diphosphate. Its function is as follows. DNA-dependent RNA polymerase catalyzes the transcription of DNA into RNA using the four ribonucleoside triphosphates as substrates. The protein is DNA-directed RNA polymerase subunit beta' of Dioscorea elephantipes (Elephant's foot yam).